The chain runs to 100 residues: Urease subunit gamma (100 aa).

It belongs to the urease gamma subunit family. As to quaternary structure, heterotrimer of UreA (gamma), UreB (beta) and UreC (alpha) subunits. Three heterotrimers associate to form the active enzyme.

Its subcellular location is the cytoplasm. The catalysed reaction is urea + 2 H2O + H(+) = hydrogencarbonate + 2 NH4(+). It participates in nitrogen metabolism; urea degradation; CO(2) and NH(3) from urea (urease route): step 1/1. This Prochlorococcus marinus (strain MIT 9312) protein is Urease subunit gamma.